A 100-amino-acid chain; its full sequence is uncharacterized protein (100 aa).

The first 26 residues, 1-26 (MKRLLVSLRVWMVFLMNWVTPDRKTA), serve as a signal peptide directing secretion.

This is an uncharacterized protein from Bacillus subtilis (strain 168).